The chain runs to 326 residues: Eukaryotic translation initiation factor 3 subunit I (326 aa).

WD repeat units lie at residues 8–47 (GHER…RLGT), 50–89 (GHQG…IIAS), 145–184 (MTES…KVVD), 188–227 (DHAA…CLKT), and 285–326 (GHFG…NIFE).

Belongs to the eIF-3 subunit I family. In terms of assembly, component of the eukaryotic translation initiation factor 3 (eIF-3) complex. The eIF-3 complex interacts with pix.

It localises to the cytoplasm. Functionally, component of the eukaryotic translation initiation factor 3 (eIF-3) complex, which is involved in protein synthesis of a specialized repertoire of mRNAs and, together with other initiation factors, stimulates binding of mRNA and methionyl-tRNAi to the 40S ribosome. The eIF-3 complex specifically targets and initiates translation of a subset of mRNAs involved in cell proliferation. This chain is Eukaryotic translation initiation factor 3 subunit I, found in Drosophila pseudoobscura pseudoobscura (Fruit fly).